The sequence spans 62 residues: uncharacterized protein (62 aa).

This is an uncharacterized protein from Escherichia coli O157:H7.